The chain runs to 1260 residues: Methionine synthase (1260 aa).

Positions 13 to 333 constitute a Hcy-binding domain; that stretch reads FGIIRKILSE…DHIRAFCNAI (321 aa). 3 residues coordinate Zn(2+): C255, C318, and C319. The Pterin-binding domain occupies 364–625; it reads FVNVGERCNV…IPKDLLKLVE (262 aa). Residues 655 to 749 form the B12-binding N-terminal domain; that stretch reads EVEEWRNKPV…FMEEEKRLKR (95 aa). Methylcob(III)alamin-binding positions include E699, 775-779, H778, S823, T827, and A879; that span reads GDVHD. The B12-binding domain maps to 766 to 883; the sequence is GVVVLATVKG…VHVLDASRSV (118 aa). Residues 916 to 1256 enclose the AdoMet activation domain; sequence SLKDRKYTSL…LSSILSYDRL (341 aa). S-adenosyl-L-methionine is bound by residues D966, R1163, and 1218–1219; that span reads YF.

This sequence belongs to the vitamin-B12 dependent methionine synthase family. Requires methylcob(III)alamin as cofactor. It depends on Zn(2+) as a cofactor.

It carries out the reaction (6S)-5-methyl-5,6,7,8-tetrahydrofolate + L-homocysteine = (6S)-5,6,7,8-tetrahydrofolate + L-methionine. The protein operates within amino-acid biosynthesis; L-methionine biosynthesis via de novo pathway; L-methionine from L-homocysteine (MetH route): step 1/1. Functionally, catalyzes the transfer of a methyl group from methyl-cobalamin to homocysteine, yielding enzyme-bound cob(I)alamin and methionine. Subsequently, remethylates the cofactor using methyltetrahydrofolate. This Dictyostelium discoideum (Social amoeba) protein is Methionine synthase (mtr).